A 387-amino-acid polypeptide reads, in one-letter code: MTVLKMTDLDLQGKRVLIREDLNVPVKDGVVTSDARILASLPTIKLALEKGAAVMVCSHLGRPTEGEFSAENSLKPVAEYLSKALGRDVPLVADYLGGVDVKAGDIVLFENVRFNKGEKKNSDELAQQYAALCDVFVMDAFGTAHRAEGSTHGVAKFAKVAAAGPLLAAELDALGKALGAPAQPMAAIVAGSKVSTKLDVLNSLSQICNQLIVGGGIANTFLAAAGHPVGKSLYEPDLLDTARAIAAKVSVPLPVDVVVAKEFAESAEATVKLIADVADDDMILDIGPQTAANFAELLKASQTILWNGPVGVFEFDQFGNGTKVLAKAIAESSAFSIAGGGDTLAAIDKYGVADQISYISTGGGAFLEFVEGKVLPAVEVLETRAKG.

Residues 21-23, R36, 59-62, R113, and R146 contribute to the substrate site; these read DLN and HLGR. ATP-binding positions include K197, E314, and 340–343; that span reads GGDT.

It belongs to the phosphoglycerate kinase family. As to quaternary structure, monomer.

The protein resides in the cytoplasm. It carries out the reaction (2R)-3-phosphoglycerate + ATP = (2R)-3-phospho-glyceroyl phosphate + ADP. It functions in the pathway carbohydrate degradation; glycolysis; pyruvate from D-glyceraldehyde 3-phosphate: step 2/5. The sequence is that of Phosphoglycerate kinase from Pseudomonas fluorescens (strain SBW25).